The following is an 88-amino-acid chain: Small ribosomal subunit protein bS16 (88 aa).

This sequence belongs to the bacterial ribosomal protein bS16 family.

The polypeptide is Small ribosomal subunit protein bS16 (Thermus aquaticus).